The chain runs to 23 residues: Aurein-4.4 (23 aa).

This sequence belongs to the frog skin active peptide (FSAP) family. Aurein subfamily. In terms of tissue distribution, expressed by the skin dorsal glands.

The protein localises to the secreted. In terms of biological role, has no antimicrobial or anticancer activity. The sequence is that of Aurein-4.4 from Ranoidea aurea (Green and golden bell frog).